Reading from the N-terminus, the 97-residue chain is UPF0235 protein PFL_5841 (97 aa).

It belongs to the UPF0235 family.

The sequence is that of UPF0235 protein PFL_5841 from Pseudomonas fluorescens (strain ATCC BAA-477 / NRRL B-23932 / Pf-5).